Here is a 150-residue protein sequence, read N- to C-terminus: Macrodomain Ter protein (150 aa).

The protein belongs to the MatP family. In terms of assembly, homodimer.

Its subcellular location is the cytoplasm. Required for spatial organization of the terminus region of the chromosome (Ter macrodomain) during the cell cycle. Prevents early segregation of duplicated Ter macrodomains during cell division. Binds specifically to matS, which is a 13 bp signature motif repeated within the Ter macrodomain. The sequence is that of Macrodomain Ter protein from Escherichia coli O8 (strain IAI1).